A 399-amino-acid chain; its full sequence is Tyrosine--tRNA ligase (399 aa).

The 'HIGH' region signature appears at 44 to 53; that stretch reads PTAPDLHLGH. Residues 229–233 carry the 'KMSKS' region motif; the sequence is KMSKS. Lys-232 contributes to the ATP binding site. One can recognise an S4 RNA-binding domain in the interval 338–398; the sequence is ISITKALVDC…GKRKFAKLKV (61 aa).

Belongs to the class-I aminoacyl-tRNA synthetase family. TyrS type 2 subfamily. In terms of assembly, homodimer.

It is found in the cytoplasm. The enzyme catalyses tRNA(Tyr) + L-tyrosine + ATP = L-tyrosyl-tRNA(Tyr) + AMP + diphosphate + H(+). Catalyzes the attachment of tyrosine to tRNA(Tyr) in a two-step reaction: tyrosine is first activated by ATP to form Tyr-AMP and then transferred to the acceptor end of tRNA(Tyr). This chain is Tyrosine--tRNA ligase, found in Sulfurimonas denitrificans (strain ATCC 33889 / DSM 1251) (Thiomicrospira denitrificans (strain ATCC 33889 / DSM 1251)).